Consider the following 508-residue polypeptide: Protein FAM227B (508 aa).

2 disordered regions span residues 1–22 (MAGQ…MQEP) and 485–508 (ASLS…EEEY). Residues 486–497 (SLSSSSSSSPSS) are compositionally biased toward low complexity.

This sequence belongs to the FAM227 family.

The sequence is that of Protein FAM227B (FAM227B) from Homo sapiens (Human).